The following is a 309-amino-acid chain: Porphobilinogen deaminase (309 aa).

S-(dipyrrolylmethanemethyl)cysteine is present on Cys-241.

The protein belongs to the HMBS family. As to quaternary structure, monomer. It depends on dipyrromethane as a cofactor.

The enzyme catalyses 4 porphobilinogen + H2O = hydroxymethylbilane + 4 NH4(+). The protein operates within porphyrin-containing compound metabolism; protoporphyrin-IX biosynthesis; coproporphyrinogen-III from 5-aminolevulinate: step 2/4. Its function is as follows. Tetrapolymerization of the monopyrrole PBG into the hydroxymethylbilane pre-uroporphyrinogen in several discrete steps. This chain is Porphobilinogen deaminase, found in Oceanobacillus iheyensis (strain DSM 14371 / CIP 107618 / JCM 11309 / KCTC 3954 / HTE831).